The following is a 633-amino-acid chain: Chaperone protein HtpG (633 aa).

The a; substrate-binding stretch occupies residues methionine 1 to arginine 341. Residues glutamate 342–arginine 562 form a b region. The segment at leucine 563–alanine 633 is c.

The protein belongs to the heat shock protein 90 family. In terms of assembly, homodimer.

Its subcellular location is the cytoplasm. In terms of biological role, molecular chaperone. Has ATPase activity. The chain is Chaperone protein HtpG from Cupriavidus metallidurans (strain ATCC 43123 / DSM 2839 / NBRC 102507 / CH34) (Ralstonia metallidurans).